The chain runs to 734 residues: Polyribonucleotide nucleotidyltransferase (734 aa).

Mg(2+) is bound by residues Asp-497 and Asp-503. The 60-residue stretch at 564-623 folds into the KH domain; sequence PRIIHITIDPDKIRDVIGPGGKVIKKIVEETGAEIDIEDDGRVFIAAVDQEKGRKAQEII. The 75-residue stretch at 633-707 folds into the S1 motif domain; that stretch reads GEIYTGRVTR…SQGRLKLSKK (75 aa). Positions 700 to 734 are disordered; sequence GRLKLSKKEATPPPESTAMKEGRAHRPSRRRESAR. Positions 717-734 are enriched in basic and acidic residues; sequence AMKEGRAHRPSRRRESAR.

It belongs to the polyribonucleotide nucleotidyltransferase family. The cofactor is Mg(2+).

It is found in the cytoplasm. The catalysed reaction is RNA(n+1) + phosphate = RNA(n) + a ribonucleoside 5'-diphosphate. Its function is as follows. Involved in mRNA degradation. Catalyzes the phosphorolysis of single-stranded polyribonucleotides processively in the 3'- to 5'-direction. This is Polyribonucleotide nucleotidyltransferase from Pelotomaculum thermopropionicum (strain DSM 13744 / JCM 10971 / SI).